We begin with the raw amino-acid sequence, 67 residues long: Envelope small membrane protein (67 aa).

Gly2 is lipidated: N-myristoyl glycine; by host. Positions 2–15 are endoplasmic reticulum retention signal; it reads GLVWSLISNSIQTI. Topologically, residues 2–27 are virion surface; the sequence is GLVWSLISNSIQTIIADFAISVIDAA. Residues 28 to 48 traverse the membrane as a helical segment; sequence LFFLMLLALAVVTVFLFWLIV. Over 49-67 the chain is Intravirion; it reads AIGRSLVARCSRGARYRPV.

Belongs to the arteriviridae E protein family. Homomultimer. Associates with itself into higher-order structures, including dimers, trimers and tetramers. Associates with the GP2b-GP3-GP4 complex. In terms of processing, myristoylated. Not glycosylated.

Its subcellular location is the virion membrane. It is found in the host endoplasmic reticulum membrane. The protein resides in the host Golgi apparatus membrane. It localises to the secreted. Functionally, minor envelope protein. May function as a viroporin in the virion envelope that facilitates uncoating of the virus in order to release the genomic RNA into the cytoplasm for subsequent replication. The polypeptide is Envelope small membrane protein (GP2a) (Equidae (horses)).